Here is a 161-residue protein sequence, read N- to C-terminus: Ribosome maturation factor RimP (161 aa).

It belongs to the RimP family.

It is found in the cytoplasm. Required for maturation of 30S ribosomal subunits. This chain is Ribosome maturation factor RimP, found in Rickettsia conorii (strain ATCC VR-613 / Malish 7).